We begin with the raw amino-acid sequence, 129 residues long: Glycine cleavage system H protein (129 aa).

Residues 24–106 (LVRVGISAFA…HGEGWLLVLR (83 aa)) enclose the Lipoyl-binding domain. Lys-65 carries the post-translational modification N6-lipoyllysine.

This sequence belongs to the GcvH family. In terms of assembly, the glycine cleavage system is composed of four proteins: P, T, L and H. The cofactor is (R)-lipoate.

Functionally, the glycine cleavage system catalyzes the degradation of glycine. The H protein shuttles the methylamine group of glycine from the P protein to the T protein. The protein is Glycine cleavage system H protein of Parasynechococcus marenigrum (strain WH8102).